A 319-amino-acid polypeptide reads, in one-letter code: MPRTIWSGAISFGLVTVPIHVVSATEDHSVRFHQYHLEDMGRVRVRKYCELEDREVTQDEIGKGYELSKDTVIPVLDEELRELPLPTAKAIEIEAFVPLASIDPMGIGEGYYLQPDGQVAAKPYKLLRQALERSSKVAVAKYAWSGRERLGMLRVREEAIVLHAMRWPDEIRDPSELAPQGIELSEDEITEAEQLIDRLTRDDLEGEEFQDHYTEALHEVIEAKQEGHAPPEARETEEEPGKVLDLMAALRQSVAKAKASRGESGEADVHELPRKKTAARKTAKQQPAKKTSAKRTAAKEPTKKTAAKKTTPKKPRRSA.

The Ku domain occupies 10–188 (ISFGLVTVPI…PQGIELSEDE (179 aa)). Residues 252-319 (QSVAKAKASR…TTPKKPRRSA (68 aa)) form a disordered region. A compositionally biased stretch (basic and acidic residues) spans 260-274 (SRGESGEADVHELPR). The segment covering 305–319 (TAAKKTTPKKPRRSA) has biased composition (basic residues).

This sequence belongs to the prokaryotic Ku family. In terms of assembly, homodimer. Interacts with LigD.

Its function is as follows. With LigD forms a non-homologous end joining (NHEJ) DNA repair enzyme, which repairs dsDNA breaks with reduced fidelity. Binds linear dsDNA with 5'- and 3'- overhangs but not closed circular dsDNA nor ssDNA. Recruits and stimulates the ligase activity of LigD. The chain is Non-homologous end joining protein Ku from Streptomyces avermitilis (strain ATCC 31267 / DSM 46492 / JCM 5070 / NBRC 14893 / NCIMB 12804 / NRRL 8165 / MA-4680).